Reading from the N-terminus, the 963-residue chain is Thrombospondin-4 (963 aa).

The N-terminal stretch at 1–26 (MPAPRAAAAAFLLLHLVLQPWQRTSA) is a signal peptide. Residues 29 to 194 (TPQVFDLLPS…LEELKLVVRG (166 aa)) enclose the Laminin G-like domain. Residues 138–140 (RGD) carry the Cell attachment site motif. One can recognise an EGF-like 1 domain in the interval 288-327 (PTRHCDSSPCFRGVRCTDTRDGFQCGPCPDGYTGNGITCS). 21 disulfides stabilise this stretch: cysteine 292-cysteine 303, cysteine 297-cysteine 312, cysteine 315-cysteine 326, cysteine 332-cysteine 343, cysteine 337-cysteine 352, cysteine 355-cysteine 379, cysteine 385-cysteine 396, cysteine 390-cysteine 405, cysteine 408-cysteine 420, cysteine 426-cysteine 440, cysteine 434-cysteine 450, cysteine 452-cysteine 463, cysteine 479-cysteine 484, cysteine 489-cysteine 509, cysteine 525-cysteine 545, cysteine 548-cysteine 568, cysteine 584-cysteine 604, cysteine 607-cysteine 627, cysteine 645-cysteine 665, cysteine 685-cysteine 705, and cysteine 721-cysteine 942. The EGF-like 2; calcium-binding domain maps to 328–365 (DVDECKYHPCYPGVRCVNLAPGFRCDACPVGFTGPMVQ). In terms of domain architecture, EGF-like 3; calcium-binding spans 381-418 (DVDECQNGACVLNSICINTLGSYRCGPCKPGYTGDQTR). The EGF-like 4 domain occupies 422 to 464 (TERSCRNPEQNPCSVHAQCIEERQGDVTCVCGVGWAGDGYVCG). TSP type-3 repeat units follow at residues 465–497 (KDVD…NSGQ), 498–533 (EDAD…NIDQ), 534–556 (RNSD…NNDQ), 557–592 (KDTD…NRDQ), 593–615 (QDRD…NPNQ), 616–653 (SDVD…NSSQ), 654–693 (LDTD…NPAQ), and 694–729 (EDSN…EITL). Positions 564-566 (RGD) match the Cell attachment site motif. The tract at residues 579–676 (NILDNCPRVP…DDDDNDGIPD (98 aa)) is disordered. Asparagine 614 and asparagine 650 each carry an N-linked (GlcNAc...) asparagine glycan. Over residues 642–654 (TDNCPTVINSSQL) the composition is skewed to polar residues. Residues 662 to 673 (GDECDDDDDNDG) show a composition bias toward acidic residues. A TSP C-terminal domain is found at 733-947 (RAYQTVVLDP…LKYRCNDTIP (215 aa)). Residue asparagine 943 is glycosylated (N-linked (GlcNAc...) asparagine).

Belongs to the thrombospondin family. Homopentamer; disulfide-linked. Interacts with PTBP3. Interacts (via EGF-like 3; calcium-binding domain) with ATF6 and facilitates its processing, activation and nuclear translocation. Interacts with NOTCH1. Heart. Up-regulated in the heart in response to ischemic injury and pathology (at protein level). Astrocytes; expressed at high levels in subventricular zone (SVZ)-derived astrocytes and at low levels in cortical astrocytes. In response to peripheral nerve injury, significantly up-regulated in the dorsal spinal cord (at protein level).

It localises to the endoplasmic reticulum. The protein resides in the sarcoplasmic reticulum. The protein localises to the secreted. It is found in the extracellular space. Its subcellular location is the extracellular matrix. Its function is as follows. Adhesive glycoprotein that mediates cell-to-cell and cell-to-matrix interactions and is involved in various processes including cellular proliferation, migration, adhesion and attachment, inflammatory response to CNS injury, regulation of vascular inflammation and adaptive responses of the heart to pressure overload and in myocardial function and remodeling. Binds to structural extracellular matrix (ECM) proteins and modulates the ECM in response to tissue damage, contributing to cardioprotective and adaptive ECM remodeling. Plays a role in ER stress response, via its interaction with the activating transcription factor 6 alpha (ATF6) which produces adaptive ER stress response factors and protects myocardium from pressure overload. May contribute to spinal presynaptic hypersensitivity and neuropathic pain states after peripheral nerve injury. May play a role in regulating protective astrogenesis from the subventricular zone (SVZ) niche after injury in a NOTCH1-dependent manner. In Mus musculus (Mouse), this protein is Thrombospondin-4 (Thbs4).